The chain runs to 364 residues: Nicotinate-nucleotide--dimethylbenzimidazole phosphoribosyltransferase (364 aa).

The active-site Proton acceptor is Glu332.

Belongs to the CobT family.

It catalyses the reaction 5,6-dimethylbenzimidazole + nicotinate beta-D-ribonucleotide = alpha-ribazole 5'-phosphate + nicotinate + H(+). The protein operates within nucleoside biosynthesis; alpha-ribazole biosynthesis; alpha-ribazole from 5,6-dimethylbenzimidazole: step 1/2. In terms of biological role, catalyzes the synthesis of alpha-ribazole-5'-phosphate from nicotinate mononucleotide (NAMN) and 5,6-dimethylbenzimidazole (DMB). The polypeptide is Nicotinate-nucleotide--dimethylbenzimidazole phosphoribosyltransferase (Salinispora tropica (strain ATCC BAA-916 / DSM 44818 / JCM 13857 / NBRC 105044 / CNB-440)).